The primary structure comprises 198 residues: ATP-dependent Clp protease proteolytic subunit 2 (198 aa).

Residue serine 94 is the Nucleophile of the active site. Histidine 119 is an active-site residue.

It belongs to the peptidase S14 family. As to quaternary structure, fourteen ClpP subunits assemble into 2 heptameric rings which stack back to back to give a disk-like structure with a central cavity, resembling the structure of eukaryotic proteasomes.

It is found in the cytoplasm. The catalysed reaction is Hydrolysis of proteins to small peptides in the presence of ATP and magnesium. alpha-casein is the usual test substrate. In the absence of ATP, only oligopeptides shorter than five residues are hydrolyzed (such as succinyl-Leu-Tyr-|-NHMec, and Leu-Tyr-Leu-|-Tyr-Trp, in which cleavage of the -Tyr-|-Leu- and -Tyr-|-Trp bonds also occurs).. Its function is as follows. Cleaves peptides in various proteins in a process that requires ATP hydrolysis. Has a chymotrypsin-like activity. Plays a major role in the degradation of misfolded proteins. The polypeptide is ATP-dependent Clp protease proteolytic subunit 2 (Borreliella burgdorferi (strain ATCC 35210 / DSM 4680 / CIP 102532 / B31) (Borrelia burgdorferi)).